The chain runs to 227 residues: Homeobox-leucine zipper protein ATHB-54 (227 aa).

Positions 65–124 (EITKKRKLTPIQLRLLEESFEEEKRLEPDRKLWLAEKLGLQPSQVAVWFQNRRARYKTKQ) form a DNA-binding region, homeobox. The leucine-zipper stretch occupies residues 125–153 (LEHDCDSLKASYAKLKTDWDILFVQNQTL). The tract at residues 175-198 (IERKRLGEEGSSVKSDNTQYSEEE) is disordered.

It belongs to the HD-ZIP homeobox family. Class I subfamily. As to expression, predominantly expressed in flowers and siliques.

It localises to the nucleus. Functionally, probable transcription factor. This Arabidopsis thaliana (Mouse-ear cress) protein is Homeobox-leucine zipper protein ATHB-54 (ATHB-54).